Reading from the N-terminus, the 108-residue chain is UPF0060 membrane protein Sputw3181_1172 (108 aa).

A run of 4 helical transmembrane segments spans residues Val3–Leu23, Gly31–Leu51, Ala63–Ile83, and Arg87–Pro107.

It belongs to the UPF0060 family.

Its subcellular location is the cell inner membrane. This chain is UPF0060 membrane protein Sputw3181_1172, found in Shewanella sp. (strain W3-18-1).